A 641-amino-acid polypeptide reads, in one-letter code: Single-strand DNA endonuclease 1 (641 aa).

Residues 1 to 90 (MGVKNLWDIL…SLKLATYRRR (90 aa)) are N-domain. Positions 2–97 (GVKNLWDILE…RRRLGSISHA (96 aa)) are XPG-N domain. 7 residues coordinate Mg(2+): Asp30, Asp76, Glu144, Glu146, Asp165, Asp167, and Asp217. The interval 132 to 217 (MALGIPCLDG…ISLAVLLGSD (86 aa)) is XPG-I domain. I-domain regions lie at residues 132-220 (MALG…DYSN) and 132-221 (MALG…YSNG). A 5'-3' exonuclease domain region spans residues 217–350 (DYSNGVNGFG…ILPKIAEREL (134 aa)). Disordered stretches follow at residues 428–448 (KGEE…QAAV) and 572–615 (VGSH…RVHH). Residues 580–590 (DGGGGGGGGVA) are compositionally biased toward gly residues.

This sequence belongs to the XPG/RAD2 endonuclease family. GEN subfamily. Mg(2+) serves as cofactor. As to expression, highly expressed in shoot apical meristem (SAM) and young leaves. Expressed in roots, flag leaf and panicles.

Its subcellular location is the nucleus. In terms of biological role, single-stranded DNA endonuclease activity in vitro. May not be active as double-stranded DNA endonuclease. Endonuclease which cleaves flap structures at the junction between single-stranded DNA and double-stranded DNA with a specific cleavage site in the 5' overhang strand exactly one nucleotide 3' of the branch point. Structure- and sequence-specific nuclease that resolves holliday junctions (HJs) by symmetrically oriented incisions in two opposing strands near the junction point, thus leading to ligatable products; HJs are physical links between homologous DNA molecules that arise as central intermediary structures during homologous recombination and repair in meiotic and somatic cells. Probably involved in the resolution of toxic replication structures to ensure genome stability, and to maintain telomere integrity and replication. The sequence is that of Single-strand DNA endonuclease 1 from Oryza sativa subsp. japonica (Rice).